We begin with the raw amino-acid sequence, 372 residues long: L-selectin (372 aa).

The N-terminal stretch at methionine 1–cysteine 28 is a signal peptide. Residues aspartate 29 to cysteine 38 constitute a propeptide that is removed on maturation. Topologically, residues tryptophan 39 to asparagine 332 are extracellular. One can recognise a C-type lectin domain in the interval arginine 55–cysteine 155. Disulfide bonds link cysteine 57-cysteine 155, cysteine 128-cysteine 147, cysteine 160-cysteine 171, cysteine 165-cysteine 180, cysteine 182-cysteine 191, cysteine 197-cysteine 241, cysteine 227-cysteine 254, cysteine 259-cysteine 303, and cysteine 289-cysteine 316. N-linked (GlcNAc...) asparagine glycosylation is found at asparagine 60 and asparagine 104. Ca(2+) contacts are provided by glutamate 118, asparagine 120, glutamate 126, asparagine 143, and aspartate 144. Residues tyrosine 156–glutamine 192 enclose the EGF-like domain. N-linked (GlcNAc...) asparagine glycosylation is present at asparagine 177. Sushi domains lie at isoleucine 195–valine 256 and isoleucine 257–lysine 318. 3 N-linked (GlcNAc...) asparagine glycosylation sites follow: asparagine 232, asparagine 246, and asparagine 271. The chain crosses the membrane as a helical span at residues proline 333 to alanine 355. Topologically, residues arginine 356–tyrosine 372 are cytoplasmic.

Belongs to the selectin/LECAM family. As to quaternary structure, interaction with SELPLG/PSGL1 and PODXL2 is required for promoting recruitment and rolling of leukocytes. This interaction is dependent on the sialyl Lewis X glycan modification of SELPLG and PODXL2, and tyrosine sulfation modifications of SELPLG. Sulfation on 'Tyr-51' of SELPLG is important for L-selectin binding. In terms of processing, N-glycosylated. Expressed in B-cell lines and T-lymphocytes.

The protein localises to the cell membrane. In terms of biological role, calcium-dependent lectin that mediates cell adhesion by binding to glycoproteins on neighboring cells. Mediates the adherence of lymphocytes to endothelial cells of high endothelial venules in peripheral lymph nodes. Promotes initial tethering and rolling of leukocytes in endothelia. This is L-selectin (SELL) from Homo sapiens (Human).